Reading from the N-terminus, the 259-residue chain is Phosphate import ATP-binding protein PstB (259 aa).

An ABC transporter domain is found at I5–K248. Position 37–44 (G37–S44) interacts with ATP.

The protein belongs to the ABC transporter superfamily. Phosphate importer (TC 3.A.1.7) family. The complex is composed of two ATP-binding proteins (PstB), two transmembrane proteins (PstC and PstA) and a solute-binding protein (PstS).

The protein localises to the cell membrane. It carries out the reaction phosphate(out) + ATP + H2O = ADP + 2 phosphate(in) + H(+). Part of the ABC transporter complex PstSACB involved in phosphate import. Responsible for energy coupling to the transport system. The protein is Phosphate import ATP-binding protein PstB of Thermobifida fusca (strain YX).